The chain runs to 475 residues: Putative poly(A) polymerase catalytic subunit (475 aa).

It belongs to the poxviridae poly(A) polymerase catalytic subunit family. Highly divergent.

It is found in the virion. It catalyses the reaction RNA(n) + ATP = RNA(n)-3'-adenine ribonucleotide + diphosphate. Its function is as follows. Polymerase that creates the 3'-poly(A) tail of mRNA's. The sequence is that of Putative poly(A) polymerase catalytic subunit from African swine fever virus (isolate Tick/South Africa/Pretoriuskop Pr4/1996) (ASFV).